A 347-amino-acid chain; its full sequence is Glucose 1-dehydrogenase (347 aa).

A Zn(2+)-binding site is contributed by C39. Residue T41 coordinates substrate. Positions 64 and 65 each coordinate Zn(2+). Positions 110 and 146 each coordinate substrate. E146 provides a ligand contact to Zn(2+). NADP(+) is bound by residues 178 to 181 (AGPV), 260 to 262 (LGV), and 289 to 291 (SVN). Substrate is bound at residue N291.

This sequence belongs to the zinc-containing alcohol dehydrogenase family. Glucose 1-dehydrogenase subfamily. Homodimer. Requires Zn(2+) as cofactor.

It catalyses the reaction D-glucose + NAD(+) = D-glucono-1,5-lactone + NADH + H(+). The catalysed reaction is D-glucose + NADP(+) = D-glucono-1,5-lactone + NADPH + H(+). Catalyzes the NAD(P)(+)-dependent oxidation of D-glucose to D-gluconate via gluconolactone. To a lesser extent, is also active with xylose as substrate, but mannose, arabinose, galactose, fructose 6-phosphate, glucose 6-phosphate, glycerinaldehyde 3-phosphate, ribose, sorbitol, ethanol, erythritol, or lactose are not oxidized by the enzyme. Can utilize both NAD(+) and NADP(+) as electron acceptor, with a marked preference for NADP(+). Is involved in the degradation of glucose through a non-phosphorylative variant of the Entner-Doudoroff pathway. In Thermoproteus tenax (strain ATCC 35583 / DSM 2078 / JCM 9277 / NBRC 100435 / Kra 1), this protein is Glucose 1-dehydrogenase (gdh).